The sequence spans 87 residues: U3-theraphotoxin-Hhn1a 10 (87 aa).

The first 24 residues, 1-24 (MVNMEASMFLTFAGLVLLFVVCYA), serve as a signal peptide directing secretion. A propeptide spanning residues 25–52 (SESEEKEFPKEMLSSIFAVDNDFKQEER) is cleaved from the precursor. 3 disulfide bridges follow: Cys54–Cys67, Cys61–Cys72, and Cys66–Cys79.

The protein belongs to the neurotoxin 10 (Hwtx-1) family. 51 (Hntx-8) subfamily. Hntx-8 sub-subfamily. As to expression, expressed by the venom gland.

The protein resides in the secreted. Ion channel inhibitor. In Cyriopagopus hainanus (Chinese bird spider), this protein is U3-theraphotoxin-Hhn1a 10.